Reading from the N-terminus, the 176-residue chain is Protein FAM89A (176 aa).

The interval 140 to 165 (DFQEQGSLRDGQGRGSPGDPSLPLTH) is disordered.

The protein belongs to the FAM89 family.

In Rattus norvegicus (Rat), this protein is Protein FAM89A (Fam89a).